Reading from the N-terminus, the 424-residue chain is UDP-N-acetylglucosamine 1-carboxyvinyltransferase (424 aa).

A phosphoenolpyruvate-binding site is contributed by 22-23; it reads KN. Position 98 (R98) interacts with UDP-N-acetyl-alpha-D-glucosamine. Residue C122 is the Proton donor of the active site. At C122 the chain carries 2-(S-cysteinyl)pyruvic acid O-phosphothioketal. UDP-N-acetyl-alpha-D-glucosamine contacts are provided by residues 127 to 131, D312, and I334; that span reads RPVDQ.

It belongs to the EPSP synthase family. MurA subfamily.

It localises to the cytoplasm. It carries out the reaction phosphoenolpyruvate + UDP-N-acetyl-alpha-D-glucosamine = UDP-N-acetyl-3-O-(1-carboxyvinyl)-alpha-D-glucosamine + phosphate. It participates in cell wall biogenesis; peptidoglycan biosynthesis. In terms of biological role, cell wall formation. Adds enolpyruvyl to UDP-N-acetylglucosamine. The sequence is that of UDP-N-acetylglucosamine 1-carboxyvinyltransferase from Xanthomonas campestris pv. campestris (strain 8004).